Reading from the N-terminus, the 206-residue chain is LexA repressor (206 aa).

A DNA-binding region (H-T-H motif) is located at residues 28-48; it reads VREICNAVGLSSTSTVHGHLS. Residues S128 and K166 each act as for autocatalytic cleavage activity in the active site.

It belongs to the peptidase S24 family. Homodimer.

It carries out the reaction Hydrolysis of Ala-|-Gly bond in repressor LexA.. Functionally, represses a number of genes involved in the response to DNA damage (SOS response), including recA and lexA. In the presence of single-stranded DNA, RecA interacts with LexA causing an autocatalytic cleavage which disrupts the DNA-binding part of LexA, leading to derepression of the SOS regulon and eventually DNA repair. This is LexA repressor from Ligilactobacillus salivarius (strain UCC118) (Lactobacillus salivarius).